Reading from the N-terminus, the 66-residue chain is Large ribosomal subunit protein uL29 (66 aa).

It belongs to the universal ribosomal protein uL29 family.

The sequence is that of Large ribosomal subunit protein uL29 from Borrelia duttonii (strain Ly).